A 293-amino-acid chain; its full sequence is SAGA-associated factor 29 (293 aa).

A coiled-coil region spans residues 3–88 (LVSADSRIAE…KALDKIAEIK (86 aa)). The 142-residue stretch at 152–293 (GDYVAKPGDK…VVACKEPKKK (142 aa)) folds into the SGF29 C-terminal domain. Histone H3K4me3 N-terminus binding regions lie at residues 194 to 196 (DID) and 240 to 243 (QTTC). Residues 264-266 (FED) are histone H3K4me3 binding. K288 bears the N6-acetyllysine mark.

It belongs to the SGF29 family. As to quaternary structure, interacts with dimethylated and trimethylated 'Lys-4' of histone H3 (H3K4me2 and H3K4me3), with a preference for the trimethylated form (H3K4me3). Component of some SAGA-type complexes. Component of the ADA2A-containing complex (ATAC), composed of KAT14, KAT2A, TADA2L, TADA3L, ZZ3, MBIP, WDR5, YEATS2, CCDC101 and DR1. Interacts with (methylated) CGAS. Interacts with TADA3L, GCN5L2, SUPT3H and MYC. As to expression, widely expressed with highest levels in testis. Highly expressed in hepatoma and other tumor cell lines.

It is found in the nucleus. In terms of biological role, chromatin reader component of some histone acetyltransferase (HAT) SAGA-type complexes like the TFTC-HAT, ATAC or STAGA complexes. SGF29 specifically recognizes and binds methylated 'Lys-4' of histone H3 (H3K4me), with a preference for trimethylated form (H3K4me3). In the SAGA-type complexes, SGF29 is required to recruit complexes to H3K4me. Involved in the response to endoplasmic reticulum (ER) stress by recruiting the SAGA complex to H3K4me, thereby promoting histone H3 acetylation and cell survival. Also binds non-histone proteins that are methylated on Lys residues: specifically recognizes and binds CGAS monomethylated on 'Lys-491'. May be involved in MYC-mediated oncogenic transformation. The chain is SAGA-associated factor 29 from Rattus norvegicus (Rat).